The following is a 483-amino-acid chain: Shaker-related potassium channel tsha2 (483 aa).

Topologically, residues 1 to 165 (MTVVSCEIQD…YPESSGPARM (165 aa)) are cytoplasmic. The chain crosses the membrane as a helical span at residues 166–186 (IAVVSVSVIVISIVIFCLETL). Over 187–220 (PQFREDTSANLPLSNHHTTNGTTLHKKPNLFTDP) the chain is Extracellular. A helical transmembrane segment spans residues 221–241 (FFMVETLCIVWFSFEFLVRFL). Topologically, residues 242-252 (SCPSKPAFFKN) are cytoplasmic. The S-palmitoyl cysteine moiety is linked to residue Cys-243. A helical membrane pass occupies residues 253 to 273 (AMNSIDILAIAPYFITLGLEL). Topologically, residues 274-324 (AEQQEAGSEQAMSLAILRVIRLVRVFRIFKLSRHSKGLQILGQTLHASISE) are extracellular. Residues 325-345 (LGLLIFFLLIGVILFSSAVYF) traverse the membrane as a helical; Voltage-sensor segment. The Cytoplasmic segment spans residues 346–353 (AEADDPES). Residues 354–374 (GFSSIPAAFWWAVVSMTTVGY) form a helical membrane-spanning segment. The Selectivity filter motif lies at 371–376 (TVGYGD). The Extracellular portion of the chain corresponds to 375 to 385 (GDMCPVTIGGK). A helical membrane pass occupies residues 386 to 406 (IVGSMCAIAGVLTIALPVPVI). Topologically, residues 407–483 (VSNFNYFYHR…EHYTGKLTDV (77 aa)) are cytoplasmic. Tyr-426 carries the phosphotyrosine modification. Position 430 is a phosphothreonine (Thr-430). Residues 440–452 (EFKSTSDSRQSLT) are compositionally biased toward polar residues. Residues 440–459 (EFKSTSDSRQSLTKSEDTEE) are disordered. Residues 481-483 (TDV) carry the PDZ-binding motif.

Belongs to the potassium channel family. A (Shaker) (TC 1.A.1.2) subfamily. Heterotetramer of potassium channel proteins. Binds PDZ domains of dlg1, dlg2 and dlg4. Expressed in oligodendrocytes and astrocytes.

The protein localises to the membrane. Its function is as follows. Mediates the voltage-dependent potassium ion permeability of excitable membranes. Assuming opened or closed conformations in response to the voltage difference across the membrane, the protein forms a potassium-selective channel through which potassium ions may pass in accordance with their electrochemical gradient. The sequence is that of Shaker-related potassium channel tsha2 from Oncorhynchus mykiss (Rainbow trout).